The primary structure comprises 295 residues: Ribosome production factor 1 (295 aa).

The segment at 24–47 is disordered; it reads HEKNKERHTMRRKRAKEERENPEL. Residues 38-47 are compositionally biased toward basic and acidic residues; sequence AKEERENPEL. The region spanning 93-276 is the Brix domain; sequence PKIFLTTNVN…LKRLQRGIKE (184 aa). The segment at 254 to 271 is RNA-binding; sequence VGLQELGPQFTLKLKRLQ.

As to quaternary structure, part of a complex that includes BRX1, RPF1, RPF2 and SSF1 or SSF2.

It is found in the nucleus. The protein localises to the nucleolus. Essential protein. Required for biogenesis of the 60S ribosomal subunit. The chain is Ribosome production factor 1 (RPF1) from Saccharomyces cerevisiae (strain ATCC 204508 / S288c) (Baker's yeast).